Reading from the N-terminus, the 419-residue chain is Putative zinc metalloprotease SP_0263 (419 aa).

Zn(2+) is bound at residue His-18. Glu-19 is a catalytic residue. A Zn(2+)-binding site is contributed by His-22. Transmembrane regions (helical) follow at residues 169-191 (LITN…WVLI), 345-367 (ILYF…IPAL), and 388-410 (EIET…AVTW).

The protein belongs to the peptidase M50B family. Requires Zn(2+) as cofactor.

Its subcellular location is the cell membrane. In Streptococcus pneumoniae serotype 4 (strain ATCC BAA-334 / TIGR4), this protein is Putative zinc metalloprotease SP_0263.